Consider the following 705-residue polypeptide: Tryptophan synthase (705 aa).

Positions 1-293 (MEAIKKVFEQ…QLTPNAETAK (293 aa)) are tryptophan synthase alpha chain. Residues E49 and D60 each act as proton acceptor in the active site. Residues 266–287 (KGEPSRVRSPGAAQRTPSQLTP) are disordered. Positions 294–705 (GVENILPARF…HVSSNAIPSK (412 aa)) are tryptophan synthase beta chain. K381 carries the N6-(pyridoxal phosphate)lysine modification.

It in the N-terminal section; belongs to the TrpA family. The protein in the C-terminal section; belongs to the TrpB family. Pyridoxal 5'-phosphate serves as cofactor.

The catalysed reaction is (1S,2R)-1-C-(indol-3-yl)glycerol 3-phosphate + L-serine = D-glyceraldehyde 3-phosphate + L-tryptophan + H2O. The protein operates within amino-acid biosynthesis; L-tryptophan biosynthesis; L-tryptophan from chorismate: step 5/5. This Coprinopsis cinerea (Inky cap fungus) protein is Tryptophan synthase (TRP-1).